A 392-amino-acid chain; its full sequence is Outer membrane protein assembly factor BamB (392 aa).

Residues 1–19 (MQLRKLLLPGLLSVTLLSG) form the signal peptide. Residue Cys20 is the site of N-palmitoyl cysteine attachment. A lipid anchor (S-diacylglycerol cysteine) is attached at Cys20.

It belongs to the BamB family. In terms of assembly, part of the Bam complex, which is composed of the outer membrane protein BamA, and four lipoproteins BamB, BamC, BamD and BamE. Monomer. Interacts directly with BamA. The Bam complex has the shape of a hat, with the BamA beta-barrel crown in the outer membrane and the periplasmic brim formed by the BamA POTRA domains and the 4 lipoproteins.

The protein localises to the cell outer membrane. Functionally, part of the outer membrane protein assembly complex (Bam), which is involved in assembly and insertion of beta-barrel proteins into the outer membrane. Nonessential member of the complex, which may orient the flexible periplasmic domain of BamA for interaction with other Bam components, chaperones and nascent outer membrane proteins. Efficient substrate folding and insertion into the outer membrane requires all 5 subunits. A lateral gate may open between the first and last strands of the BamA beta-barrel that allows substrate to insert into the outer membrane; comparison of the structures of complete and nearly complete Bam complexes show there is considerable movement of all 5 proteins. This Escherichia coli (strain K12) protein is Outer membrane protein assembly factor BamB.